Consider the following 265-residue polypeptide: NAD kinase 1 (265 aa).

Catalysis depends on Asp-45, which acts as the Proton acceptor. NAD(+) is bound by residues Asp-45–Gly-46, His-50, Asn-122–Glu-123, Arg-148, Asp-150, and Ala-185.

Belongs to the NAD kinase family. It depends on a divalent metal cation as a cofactor.

The protein resides in the cytoplasm. It carries out the reaction NAD(+) + ATP = ADP + NADP(+) + H(+). Its function is as follows. Involved in the regulation of the intracellular balance of NAD and NADP, and is a key enzyme in the biosynthesis of NADP. Catalyzes specifically the phosphorylation on 2'-hydroxyl of the adenosine moiety of NAD to yield NADP. In Halalkalibacterium halodurans (strain ATCC BAA-125 / DSM 18197 / FERM 7344 / JCM 9153 / C-125) (Bacillus halodurans), this protein is NAD kinase 1.